A 499-amino-acid polypeptide reads, in one-letter code: MIKRALISVFDKTGILDLAKFLESRDVEIISTGGTYKHLKENGVKVIDIEEVTGFPEMLDGRVKTLNPLIHGGILAIRDNEEHMKVIEEKGINPIDMVVVNLYPFFNKVEENLSFDEKVEFIDIGGPTMIRAAAKNFKDVVVLTDTKDYENVINEIKENNQVNIQTRKKLAGKVFNLMSAYDAAISNFLLEEEYPEYLTLSYKKNMDLRYGENPHQTAAYYTSTVGKYPMKNFEKLNGKELSYNNIKDMDIAWKTVCEFEEVACCALKHNTPCGVAIGDTVQEAYTKAYECDPISIFGGIVAFNRKVDKETAENLAKIFLEIVVAPDFDEDALEVLKNKKNLRVIKCEEKSTEGKDMAKVDGGILVQKSDNKLLEDTKVVTEKSPTEQEMKDLIFGMKVVKYVKSNAIVVVKDGMAKGIGGGQVNRIWAAKEALDRAGDGVVLASDAFFPFGDVAEEAAKWGIKAIIQPGGSIRDEESIKVCNEKGISMVFTGIRHFKH.

The MGS-like domain occupies 1-144 (MIKRALISVF…KNFKDVVVLT (144 aa)).

The protein belongs to the PurH family.

It catalyses the reaction (6R)-10-formyltetrahydrofolate + 5-amino-1-(5-phospho-beta-D-ribosyl)imidazole-4-carboxamide = 5-formamido-1-(5-phospho-D-ribosyl)imidazole-4-carboxamide + (6S)-5,6,7,8-tetrahydrofolate. It carries out the reaction IMP + H2O = 5-formamido-1-(5-phospho-D-ribosyl)imidazole-4-carboxamide. The protein operates within purine metabolism; IMP biosynthesis via de novo pathway; 5-formamido-1-(5-phospho-D-ribosyl)imidazole-4-carboxamide from 5-amino-1-(5-phospho-D-ribosyl)imidazole-4-carboxamide (10-formyl THF route): step 1/1. It functions in the pathway purine metabolism; IMP biosynthesis via de novo pathway; IMP from 5-formamido-1-(5-phospho-D-ribosyl)imidazole-4-carboxamide: step 1/1. In Clostridium botulinum (strain Hall / ATCC 3502 / NCTC 13319 / Type A), this protein is Bifunctional purine biosynthesis protein PurH.